The sequence spans 426 residues: CinA-like protein (426 aa).

Belongs to the CinA family.

The polypeptide is CinA-like protein (Gloeobacter violaceus (strain ATCC 29082 / PCC 7421)).